Reading from the N-terminus, the 20-residue chain is NEQSGISQTVIVGPWGAQVT.

It belongs to the jacalin lectin family. As to quaternary structure, tetramer of four alpha chains associated with two or four beta chains.

In terms of biological role, D-galactose-specific lectin, binds the T-antigen structure Gal-beta1,3-GalNAc (Thomsen-Friedenreich-antigen-specific lectin). Potent and selective stimulant of distinct T- and B-cell functions. Shows a unique ability to specifically recognize IgA-1 from human serum. The protein is Agglutinin beta-4 chain of Artocarpus integer (Jack fruit).